The following is a 513-amino-acid chain: Galactose-1-phosphate uridylyltransferase (513 aa).

This sequence belongs to the galactose-1-phosphate uridylyltransferase type 2 family.

It localises to the cytoplasm. It carries out the reaction alpha-D-galactose 1-phosphate + UDP-alpha-D-glucose = alpha-D-glucose 1-phosphate + UDP-alpha-D-galactose. It functions in the pathway carbohydrate metabolism; galactose metabolism. The sequence is that of Galactose-1-phosphate uridylyltransferase (galT) from Bacillus subtilis (strain 168).